Reading from the N-terminus, the 781-residue chain is uncharacterized protein (781 aa).

The tract at residues 1–34 (MNIAEEPSDEVISSGPEDTDICSQQTSASAEAGD) is disordered. S29 is modified (phosphoserine). RRM domains are found at residues 195–273 (GNIF…YHVE) and 295–418 (RCLF…KAVQ). The segment at 345 to 375 (SNTRSSSSVSFNEEGSVESNKSSNNTNGNAQ) is disordered. Positions 347–364 (TRSSSSVSFNEEGSVESN) are enriched in low complexity. Over residues 365–374 (KSSNNTNGNA) the composition is skewed to polar residues. 4 positions are modified to phosphoserine: S433, S435, S482, and S485. A Phosphothreonine modification is found at T486. S501 bears the Phosphoserine mark. The region spanning 540–638 (SNLYVKHIPL…QVLSVSFAQK (99 aa)) is the RRM 3 domain. The segment at 640-668 (GNLSSSDDDDQSQTDNSSKFQNFQPHNDY) is disordered.

Interacts with RBG1.

This is an uncharacterized protein from Saccharomyces cerevisiae (strain ATCC 204508 / S288c) (Baker's yeast).